The chain runs to 154 residues: Ribonuclease H (154 aa).

The RNase H type-1 domain occupies 1–142 (MEKTVEIYTD…VDDLARDAAG (142 aa)). The Mg(2+) site is built by Asp10, Glu48, Asp70, and Asp134.

Belongs to the RNase H family. As to quaternary structure, monomer. It depends on Mg(2+) as a cofactor.

Its subcellular location is the cytoplasm. It catalyses the reaction Endonucleolytic cleavage to 5'-phosphomonoester.. In terms of biological role, endonuclease that specifically degrades the RNA of RNA-DNA hybrids. The polypeptide is Ribonuclease H (Pseudoalteromonas translucida (strain TAC 125)).